A 475-amino-acid polypeptide reads, in one-letter code: Pentatricopeptide repeat-containing protein At1g29710, mitochondrial (475 aa).

A mitochondrion-targeting transit peptide spans 1–37 (MVRLWCGKLRLWKPYLALATQSRNSWFCSGGGAPSHH). 6 PPR repeats span residues 83–117 (AQNV…GYAM), 118–148 (DLIR…IIAL), 153–183 (DVGA…MPEW), 184–218 (NSGT…GNKP), 219–254 (NGEI…GIVP), and 255–285 (SMEH…MPME). The segment at 350 to 380 (YFYSTFRPVDSSHPQMNIIYETLMSLRSQLK) is type E(+) motif. Residues 381–475 (EMGYVPDTRY…NGVCRCNNLW (95 aa)) form a type DYW motif region.

The protein belongs to the PPR family. PCMP-H subfamily.

The protein resides in the mitochondrion. The chain is Pentatricopeptide repeat-containing protein At1g29710, mitochondrial (PCMP-H67) from Arabidopsis thaliana (Mouse-ear cress).